A 309-amino-acid chain; its full sequence is Olfactory receptor 8A1 (309 aa).

Residues 1–28 (MTAENQSTVTEFILGGLTNRPELQLPLF) are Extracellular-facing. The chain crosses the membrane as a helical span at residues 29–49 (LLFLGIYVVTMVGNLGMITLI). At 50–56 (GLNSQLH) the chain is on the cytoplasmic side. A helical membrane pass occupies residues 57 to 77 (TPMYFFLSNLSLVDLCYSSVI). Residues 78-90 (TPKMLINFVSQRN) lie on the Extracellular side of the membrane. The chain crosses the membrane as a helical span at residues 91-111 (LISYVGCMSQLYFFLVFVIAE). A disulfide bridge connects residues Cys-97 and Cys-188. Residues 112–133 (CYMLTVMAYDRYVAICQPLLYN) are Cytoplasmic-facing. A helical transmembrane segment spans residues 134–154 (IIMSPALCSLLVAFVYAVGLI). Over 155–195 (GSAIETGLMLKLNYCEDLISHYFCDILPLMKLSCSSTYDVE) the chain is Extracellular. Residues 196–216 (MAVFFLAGFDIIVTSLTVLIS) traverse the membrane as a helical segment. At 217–238 (YAFILSSILRISSNEGRSKAFS) the chain is on the cytoplasmic side. The helical transmembrane segment at 239–259 (TCSSHFAAVGLFYGSTAFMYL) threads the bilayer. Residues 260-270 (KPSTASSLAQE) are Extracellular-facing. Residues 271 to 291 (NVASVFYTTVIPMFNPLIYSL) form a helical membrane-spanning segment. Residues 292–309 (RNKEVKTALDKTLRRKVF) are Cytoplasmic-facing.

Belongs to the G-protein coupled receptor 1 family.

Its subcellular location is the cell membrane. Functionally, odorant receptor. In Mus musculus (Mouse), this protein is Olfactory receptor 8A1.